The primary structure comprises 157 residues: Endosomal/vacuolar adapter protein YPT35 (157 aa).

Residues 43–157 (ITDVLVGDYH…SPVITHFILN (115 aa)) form the PX domain.

The protein belongs to the YPT35 family.

The protein localises to the endosome membrane. It localises to the vacuole membrane. Recruits the lipid transfer protein VPS13 to endosomal and vacuolar membranes. The protein is Endosomal/vacuolar adapter protein YPT35 (YPT35) of Debaryomyces hansenii (strain ATCC 36239 / CBS 767 / BCRC 21394 / JCM 1990 / NBRC 0083 / IGC 2968) (Yeast).